The sequence spans 252 residues: DNA-directed RNA polymerase III subunit rpc8 (252 aa).

The disordered stretch occupies residues 214–252 (WTNQSAGDDDENEEDGGENQDDEVAEDDGGEEPTIEEDE). Over residues 220 to 252 (GDDDENEEDGGENQDDEVAEDDGGEEPTIEEDE) the composition is skewed to acidic residues.

Belongs to the eukaryotic RPB7/RPC8 RNA polymerase subunit family. Component of the RNA polymerase III (Pol III) complex consisting of several subunits.

Its subcellular location is the nucleus. In terms of biological role, DNA-dependent RNA polymerase catalyzes the transcription of DNA into RNA using the four ribonucleoside triphosphates as substrates. This Dictyostelium discoideum (Social amoeba) protein is DNA-directed RNA polymerase III subunit rpc8 (polr3h-1).